The following is a 137-amino-acid chain: MRILGLDVGTKTVGVAISDEMGWTAQGLETIKINEERGQFGFDRISELVKQYDVDKIVVGLPKNMNGTIGPRGEACQQFAENLRELLQLDVVMWDERLSTMAAERLLISADVSRKKRKQVIDKMAAVVILQGFLDRK.

This sequence belongs to the YqgF nuclease family.

It is found in the cytoplasm. In terms of biological role, could be a nuclease involved in processing of the 5'-end of pre-16S rRNA. This is Putative pre-16S rRNA nuclease from Bacillus cereus (strain AH187).